A 95-amino-acid chain; its full sequence is Hge-scorpine (95 aa).

An N-terminal signal peptide occupies residues 1–19 (MNTKLTVLCFLGIVTIVSC). The BetaSPN-type CS-alpha/beta domain maps to 55 to 94 (QFGCFANVDVKGDCKRHCKAEDKEGICHGTKCKCGVPISY). 3 disulfide bridges follow: Cys58-Cys81, Cys68-Cys86, and Cys72-Cys88.

The protein belongs to the long chain scorpion toxin family. Class 3 subfamily. In terms of tissue distribution, expressed by the venom gland.

The protein resides in the secreted. Has antibacterial activity against B.subtilis, but not against S.aureus. Also has hemolytic and cytolytic activities. Since cell lysis occurs at the tested concentrations, observation of activity on potassium channels is impossible. In terms of biological role, blocks Kv1.1/KCNA1 (IC(50)=185 nM) potassium channels. Shows a weak hemolytic activity. The chain is Hge-scorpine from Hoffmannihadrurus gertschi (Scorpion).